We begin with the raw amino-acid sequence, 428 residues long: Secernin-2 (428 aa).

The active site involves C10.

The protein belongs to the peptidase C69 family. Secernin subfamily.

The chain is Secernin-2 (scrn2) from Xenopus laevis (African clawed frog).